Reading from the N-terminus, the 445-residue chain is uncharacterized protein (445 aa).

Zn(2+) is bound at residue histidine 66. Glutamate 69 acts as the Proton acceptor in catalysis. Zn(2+)-binding residues include histidine 70 and glutamate 146. Positions 232-251 (GRQSAPPRKSTGRINGGPAL) are disordered.

This sequence belongs to the peptidase M16 family. Zn(2+) is required as a cofactor.

This is an uncharacterized protein from Mycobacterium leprae (strain TN).